The sequence spans 172 residues: C-phycocyanin beta chain (172 aa).

Position 72 is an N4-methylasparagine (Asn72). (2R,3E)-phycocyanobilin is bound by residues Cys82 and Cys153.

It belongs to the phycobiliprotein family. As to quaternary structure, heterodimer of an alpha and a beta subunit, which further assembles into trimers and the trimers into hexamers. The basic functional unit of phycobiliproteins is a ring-shaped hexamer formed from two back-to-back trimers contacting via the alpha chain subunits. The trimers are composed of alpha/beta subunit heterodimers arranged around a three-fold axis of symmetry. The phycoerythrins also contain a gamma subunit which is located in the center of the hexamer. Contains two covalently linked bilin chromophores.

The protein resides in the plastid. It is found in the chloroplast thylakoid membrane. Light-harvesting photosynthetic bile pigment-protein from the phycobiliprotein complex (phycobilisome, PBS). Phycocyanin is the major phycobiliprotein in the PBS rod. In Pyropia yezoensis (Susabi-nori), this protein is C-phycocyanin beta chain (cpcB).